The sequence spans 1170 residues: MLEGPILAVSRQTSSVAGIPGASTRYSFAKIDAPIEVPGLLDLQRESFAWLVGAPEWRARMQAEAGEGVRVTSGLEDILEELSPIEDYSENMSLTLSEPRFDDMKTSIDEAKEKDINYAAPLYVTAEFTNAQSGEIKSQTVFIGDFPMMTDKGTFIINGTERVVVSQLVRSPGVYFDESIDTSTERPLHGVKVIPSRGAWLEFDVDKRDTVGVRIDRKRRQPVTVLLKALGLTTQEITDRFGFSEIMMSTLEKDGVENTDEALLEIYRKQRPGESPTRDSAQALLENSFFRPKRYDLAKVGRYKVNRKLGLGGDTDGTMTLTEEDILTTIEYLVRLHAGERTMTSPEGVEIPIEVDDIDHFGNRRLRTVGELIQNQVRVGLSRMERVVRERMTTQDAESITPTSLINVRPVSAAIREFFGTSQLSQFMDQNNSLSGLTHKRRLNALGPGGLSRERAGLEVRDVHPSHYGRMCPIETPEGPNIGLIGSLSSYARVNPFGFIETPYRRVVDGQITDEVEYFTADEEDRHVIAQANTPFDADMKFTEDQIEVRLRGGDVEVVPASQVDYMDVSPRQMVSVATAMIPFLEHDDANRALMGANMQRQAVPLLRAEAPYVGTGIEQRAAYDAGDLIIAPKAGVVEYVSADYITIMDDEGIRDTFMLRKFERTNQGTSYNQKPLVNQGDRVEAGQVIADGPGTDNGEMALGKNLLVAFMPWEGHNYEDAIILSQRMVEEDVLTSIHIEEYEIDARDTKLGPEEITRDIPNVGEDVLADLDERGIVRIGADVRDGDILVGKVTPKGETELTPEERLLRAIFGEKAREVRDTSMKVPHGETGKVIGVRVFSREDDDDLAAGVNEMVRVYVAQKRKIQDGDKLAGRHGNKGVVGKILPQEDMPFLPDGTPVDIILNTHGVPRRMNIGQVLEVHLGWLAKAGWQVDTNSDDPKIKAMLETLPEDLYDVPADSLTSTPVFDGASNAELSGLLRSSRPDRDGIRLVDDFGKAQLIDGRTGEPYEHPISVGYMYMLKLHHLVDEKIHARSTGPYSMITQQPLGGKAQFGGQRFGEMEVWAMQAYGAAYTLQELLTIKSDDVVGRVKVYEAIVKGENIPDPGIPESFKVLLKELQSLCLNVEVLAADGTPMELSSDDDDELESANAALGINLQRDERPDADIDVG.

The protein belongs to the RNA polymerase beta chain family. As to quaternary structure, the RNAP catalytic core consists of 2 alpha, 1 beta, 1 beta' and 1 omega subunit. When a sigma factor is associated with the core the holoenzyme is formed, which can initiate transcription.

It catalyses the reaction RNA(n) + a ribonucleoside 5'-triphosphate = RNA(n+1) + diphosphate. Its function is as follows. DNA-dependent RNA polymerase catalyzes the transcription of DNA into RNA using the four ribonucleoside triphosphates as substrates. The protein is DNA-directed RNA polymerase subunit beta of Corynebacterium urealyticum (strain ATCC 43042 / DSM 7109).